The chain runs to 415 residues: Gamma-glutamyl phosphate reductase (415 aa).

Belongs to the gamma-glutamyl phosphate reductase family.

It localises to the cytoplasm. It carries out the reaction L-glutamate 5-semialdehyde + phosphate + NADP(+) = L-glutamyl 5-phosphate + NADPH + H(+). Its pathway is amino-acid biosynthesis; L-proline biosynthesis; L-glutamate 5-semialdehyde from L-glutamate: step 2/2. Functionally, catalyzes the NADPH-dependent reduction of L-glutamate 5-phosphate into L-glutamate 5-semialdehyde and phosphate. The product spontaneously undergoes cyclization to form 1-pyrroline-5-carboxylate. The protein is Gamma-glutamyl phosphate reductase of Bacteroides fragilis (strain YCH46).